A 165-amino-acid polypeptide reads, in one-letter code: Small ribosomal subunit protein bS16 (165 aa).

Residues 110-165 are disordered; that stretch reads LSEANNGPTAEAITEKKKKAREDKEAKEAAEKAAAEKAAAAESEEAPAEEAAAEEA. The span at 129–144 shows a compositional bias: basic and acidic residues; sequence AREDKEAKEAAEKAAA. The span at 151-165 shows a compositional bias: acidic residues; the sequence is ESEEAPAEEAAAEEA.

This sequence belongs to the bacterial ribosomal protein bS16 family.

The protein is Small ribosomal subunit protein bS16 of Corynebacterium glutamicum (strain R).